We begin with the raw amino-acid sequence, 398 residues long: Candidapepsin-2 (398 aa).

The N-terminal stretch at 1–18 (MFLKNIFIGLAIALLVDA) is a signal peptide. A propeptide spans 19–56 (TPTTTKRSAGFVALDFSVVKTPKAFPVTNGQEGKTSKR) (activation peptide). One can recognise a Peptidase A1 domain in the interval 70–384 (YAADITVGSN…DLDNNEISLA (315 aa)). D88 is a catalytic residue. 88-90 (DTG) provides a ligand contact to pepstatin A. C103 and C115 form a disulfide bridge. Residues 141–142 (GD) and 274–278 (DSGTT) each bind pepstatin A. D274 is an active-site residue. A disulfide bridge links C312 with C350. 2 N-linked (GlcNAc...) asparagine glycosylation sites follow: N313 and N321.

This sequence belongs to the peptidase A1 family. As to quaternary structure, monomer. O-glycosylated.

The protein localises to the secreted. The enzyme catalyses Preferential cleavage at the carboxyl of hydrophobic amino acids, but fails to cleave 15-Leu-|-Tyr-16, 16-Tyr-|-Leu-17 and 24-Phe-|-Phe-25 of insulin B chain. Activates trypsinogen, and degrades keratin.. The polypeptide is Candidapepsin-2 (SAP2) (Candida albicans (strain WO-1) (Yeast)).